The sequence spans 77 residues: Putative ankyrin repeat protein RC0956 (77 aa).

An ANK repeat occupies 8–38 (TDISPLMLASEYGQVTIVKYLLKHGNYNVKG).

The protein is Putative ankyrin repeat protein RC0956 of Rickettsia conorii (strain ATCC VR-613 / Malish 7).